Consider the following 426-residue polypeptide: DUF724 domain-containing protein 9 (426 aa).

2 stretches are compositionally biased toward polar residues: residues 164 to 184 and 213 to 222; these read ESSL…NANE and PRNQNASVND. The segment at 164–248 is disordered; sequence ESSLTQGSGD…REESLCSDAS (85 aa). Basic and acidic residues predominate over residues 223-242; that stretch reads STRENENSEDINRKRKREES. The 170-residue stretch at 256-425 folds into the DUF724 domain; the sequence is LPFEKKLSIW…LQFQTTASAP (170 aa). Residues 370–402 adopt a coiled-coil conformation; sequence AEKESIKIENERKILELQRLNEEVDKEIAQSKS.

As to expression, expressed in flowers.

The protein localises to the nucleus. Its function is as follows. May be involved in the polar growth of plant cells via transportation of RNAs. This chain is DUF724 domain-containing protein 9, found in Arabidopsis thaliana (Mouse-ear cress).